The following is a 144-amino-acid chain: Large ribosomal subunit protein uL16 (144 aa).

It belongs to the universal ribosomal protein uL16 family. In terms of assembly, part of the 50S ribosomal subunit.

Functionally, binds 23S rRNA and is also seen to make contacts with the A and possibly P site tRNAs. This chain is Large ribosomal subunit protein uL16, found in Porphyromonas gingivalis (strain ATCC 33277 / DSM 20709 / CIP 103683 / JCM 12257 / NCTC 11834 / 2561).